The sequence spans 149 residues: D-aminoacyl-tRNA deacylase (149 aa).

Positions 137–138 (GP) match the Gly-cisPro motif, important for rejection of L-amino acids motif.

Belongs to the DTD family. Homodimer.

Its subcellular location is the cytoplasm. It carries out the reaction glycyl-tRNA(Ala) + H2O = tRNA(Ala) + glycine + H(+). The catalysed reaction is a D-aminoacyl-tRNA + H2O = a tRNA + a D-alpha-amino acid + H(+). In terms of biological role, an aminoacyl-tRNA editing enzyme that deacylates mischarged D-aminoacyl-tRNAs. Also deacylates mischarged glycyl-tRNA(Ala), protecting cells against glycine mischarging by AlaRS. Acts via tRNA-based rather than protein-based catalysis; rejects L-amino acids rather than detecting D-amino acids in the active site. By recycling D-aminoacyl-tRNA to D-amino acids and free tRNA molecules, this enzyme counteracts the toxicity associated with the formation of D-aminoacyl-tRNA entities in vivo and helps enforce protein L-homochirality. The protein is D-aminoacyl-tRNA deacylase of Syntrophobacter fumaroxidans (strain DSM 10017 / MPOB).